The chain runs to 207 residues: Basic helix-loop-helix transcription factor scleraxis (207 aa).

Disordered stretches follow at residues 1–91 (MSFA…RDRT) and 151–183 (AFFH…QPKQ). Basic and acidic residues predominate over residues 73–91 (PGREPRQRHTANARERDRT). The bHLH domain occupies 78–130 (RQRHTANARERDRTNSVNTAFTALRTLIPTEPADRKLSKIETLRLASSYISHL). The segment covering 161–171 (PLPPPPPPPPL) has biased composition (pro residues).

As to quaternary structure, efficient DNA binding requires dimerization with another bHLH protein. Dimerizes and binds the E-box consensus sequence with E12. In terms of tissue distribution, expressed in mesenchymal precursors of cartilage and in connective tissue. Highly expressed in tendons in the limb, tongue and diaphragm and in cartilage of the bronchi.

The protein resides in the nucleus. Functionally, plays an early essential role in mesoderm formation, as well as a later role in formation of somite-derived chondrogenic lineages. This is Basic helix-loop-helix transcription factor scleraxis (Scx) from Mus musculus (Mouse).